We begin with the raw amino-acid sequence, 483 residues long: Probable glycine dehydrogenase (decarboxylating) subunit 2 (483 aa).

Lys-267 carries the post-translational modification N6-(pyridoxal phosphate)lysine.

This sequence belongs to the GcvP family. C-terminal subunit subfamily. The glycine cleavage system is composed of four proteins: P, T, L and H. In this organism, the P 'protein' is a heterodimer of two subunits. Requires pyridoxal 5'-phosphate as cofactor.

The catalysed reaction is N(6)-[(R)-lipoyl]-L-lysyl-[glycine-cleavage complex H protein] + glycine + H(+) = N(6)-[(R)-S(8)-aminomethyldihydrolipoyl]-L-lysyl-[glycine-cleavage complex H protein] + CO2. Functionally, the glycine cleavage system catalyzes the degradation of glycine. The P protein binds the alpha-amino group of glycine through its pyridoxal phosphate cofactor; CO(2) is released and the remaining methylamine moiety is then transferred to the lipoamide cofactor of the H protein. The protein is Probable glycine dehydrogenase (decarboxylating) subunit 2 of Kosmotoga olearia (strain ATCC BAA-1733 / DSM 21960 / TBF 19.5.1).